Here is a 734-residue protein sequence, read N- to C-terminus: Photosystem I P700 chlorophyll a apoprotein A2 (734 aa).

8 helical membrane passes run 46 to 69 (IFAS…FHVA), 135 to 158 (LYTG…LHLQ), 175 to 199 (LNHH…HVAI), 273 to 291 (IAHH…GHMY), 330 to 353 (LHFQ…QHMY), 369 to 395 (AALY…IFFI), 417 to 439 (AIIS…LYVH), and 517 to 535 (FLVH…LILV). 2 residues coordinate [4Fe-4S] cluster: Cys-559 and Cys-568. Transmembrane regions (helical) follow at residues 575 to 596 (AFYL…YWHW) and 643 to 665 (LSVW…MFLI). Residues His-654, Met-662, and Tyr-670 each contribute to the chlorophyll a site. Position 671 (Trp-671) interacts with phylloquinone. The chain crosses the membrane as a helical span at residues 707–727 (LVGLAHFSVGYIFTYAAFLIA).

This sequence belongs to the PsaA/PsaB family. As to quaternary structure, the PsaA/B heterodimer binds the P700 chlorophyll special pair and subsequent electron acceptors. PSI consists of a core antenna complex that captures photons, and an electron transfer chain that converts photonic excitation into a charge separation. The eukaryotic PSI reaction center is composed of at least 11 subunits. The cofactor is P700 is a chlorophyll a/chlorophyll a' dimer, A0 is one or more chlorophyll a, A1 is one or both phylloquinones and FX is a shared 4Fe-4S iron-sulfur center..

Its subcellular location is the plastid. The protein localises to the chloroplast thylakoid membrane. The enzyme catalyses reduced [plastocyanin] + hnu + oxidized [2Fe-2S]-[ferredoxin] = oxidized [plastocyanin] + reduced [2Fe-2S]-[ferredoxin]. In terms of biological role, psaA and PsaB bind P700, the primary electron donor of photosystem I (PSI), as well as the electron acceptors A0, A1 and FX. PSI is a plastocyanin-ferredoxin oxidoreductase, converting photonic excitation into a charge separation, which transfers an electron from the donor P700 chlorophyll pair to the spectroscopically characterized acceptors A0, A1, FX, FA and FB in turn. Oxidized P700 is reduced on the lumenal side of the thylakoid membrane by plastocyanin. The sequence is that of Photosystem I P700 chlorophyll a apoprotein A2 from Nicotiana tabacum (Common tobacco).